The chain runs to 347 residues: Holliday junction branch migration complex subunit RuvB (347 aa).

A compositionally biased stretch (polar residues) spans 1–10; it reads MAIVSSSSGR. Residues 1–29 are disordered; that stretch reads MAIVSSSSGRKSPCRETALVDPQPAPEEQ. The large ATPase domain (RuvB-L) stretch occupies residues 13–198; the sequence is PCRETALVDP…FGLIQRLEFY (186 aa). Residues leucine 37, arginine 38, glycine 79, lysine 82, threonine 83, threonine 84, arginine 188, tyrosine 198, and arginine 235 each contribute to the ATP site. Mg(2+) is bound at residue threonine 83. The interval 199–270 is small ATPAse domain (RuvB-S); that stretch reads GQTDLEAIVA…MVAEALSLHR (72 aa). The head domain (RuvB-H) stretch occupies residues 273 to 347; sequence HRGLDASDRR…AARSHIAEAA (75 aa). Residues arginine 328 and arginine 333 each coordinate DNA.

This sequence belongs to the RuvB family. In terms of assembly, homohexamer. Forms an RuvA(8)-RuvB(12)-Holliday junction (HJ) complex. HJ DNA is sandwiched between 2 RuvA tetramers; dsDNA enters through RuvA and exits via RuvB. An RuvB hexamer assembles on each DNA strand where it exits the tetramer. Each RuvB hexamer is contacted by two RuvA subunits (via domain III) on 2 adjacent RuvB subunits; this complex drives branch migration. In the full resolvosome a probable DNA-RuvA(4)-RuvB(12)-RuvC(2) complex forms which resolves the HJ.

It localises to the cytoplasm. It catalyses the reaction ATP + H2O = ADP + phosphate + H(+). Its function is as follows. The RuvA-RuvB-RuvC complex processes Holliday junction (HJ) DNA during genetic recombination and DNA repair, while the RuvA-RuvB complex plays an important role in the rescue of blocked DNA replication forks via replication fork reversal (RFR). RuvA specifically binds to HJ cruciform DNA, conferring on it an open structure. The RuvB hexamer acts as an ATP-dependent pump, pulling dsDNA into and through the RuvAB complex. RuvB forms 2 homohexamers on either side of HJ DNA bound by 1 or 2 RuvA tetramers; 4 subunits per hexamer contact DNA at a time. Coordinated motions by a converter formed by DNA-disengaged RuvB subunits stimulates ATP hydrolysis and nucleotide exchange. Immobilization of the converter enables RuvB to convert the ATP-contained energy into a lever motion, pulling 2 nucleotides of DNA out of the RuvA tetramer per ATP hydrolyzed, thus driving DNA branch migration. The RuvB motors rotate together with the DNA substrate, which together with the progressing nucleotide cycle form the mechanistic basis for DNA recombination by continuous HJ branch migration. Branch migration allows RuvC to scan DNA until it finds its consensus sequence, where it cleaves and resolves cruciform DNA. The sequence is that of Holliday junction branch migration complex subunit RuvB from Synechococcus sp. (strain CC9902).